Reading from the N-terminus, the 691-residue chain is Elongation factor G (691 aa).

A tr-type G domain is found at 8–282; that stretch reads ERVRNIGIAA…AVVDYLPAPV (275 aa). Residues 17–24, 81–85, and 135–138 each bind GTP; these read AHIDAGKT, DTPGH, and NKMD.

The protein belongs to the TRAFAC class translation factor GTPase superfamily. Classic translation factor GTPase family. EF-G/EF-2 subfamily.

Its subcellular location is the cytoplasm. In terms of biological role, catalyzes the GTP-dependent ribosomal translocation step during translation elongation. During this step, the ribosome changes from the pre-translocational (PRE) to the post-translocational (POST) state as the newly formed A-site-bound peptidyl-tRNA and P-site-bound deacylated tRNA move to the P and E sites, respectively. Catalyzes the coordinated movement of the two tRNA molecules, the mRNA and conformational changes in the ribosome. The protein is Elongation factor G of Prochlorococcus marinus (strain MIT 9515).